The following is a 346-amino-acid chain: Biotin synthase (346 aa).

Positions 38-256 (RQVQVSTLLS…IAVARIMMPT (219 aa)) constitute a Radical SAM core domain. [4Fe-4S] cluster-binding residues include Cys-53, Cys-57, and Cys-60. [2Fe-2S] cluster is bound by residues Cys-97, Cys-128, Cys-188, and Arg-260.

Belongs to the radical SAM superfamily. Biotin synthase family. As to quaternary structure, homodimer. [4Fe-4S] cluster is required as a cofactor. [2Fe-2S] cluster serves as cofactor.

It carries out the reaction (4R,5S)-dethiobiotin + (sulfur carrier)-SH + 2 reduced [2Fe-2S]-[ferredoxin] + 2 S-adenosyl-L-methionine = (sulfur carrier)-H + biotin + 2 5'-deoxyadenosine + 2 L-methionine + 2 oxidized [2Fe-2S]-[ferredoxin]. It functions in the pathway cofactor biosynthesis; biotin biosynthesis; biotin from 7,8-diaminononanoate: step 2/2. Its function is as follows. Catalyzes the conversion of dethiobiotin (DTB) to biotin by the insertion of a sulfur atom into dethiobiotin via a radical-based mechanism. In Escherichia fergusonii (strain ATCC 35469 / DSM 13698 / CCUG 18766 / IAM 14443 / JCM 21226 / LMG 7866 / NBRC 102419 / NCTC 12128 / CDC 0568-73), this protein is Biotin synthase.